We begin with the raw amino-acid sequence, 569 residues long: Potassium-transporting ATPase potassium-binding subunit (569 aa).

Helical transmembrane passes span 3-23, 68-88, 136-156, 179-199, 259-279, 284-304, 384-404, 422-442, 490-510, and 534-554; these read LMEY…SPVL, AASL…VLML, VGLA…AVAV, VLYV…GQGV, LQML…GGAV, HAWT…CSLY, GLYG…LMVG, AMLA…VAAV, IALA…GVAG, and LLLT…ALAL.

The protein belongs to the KdpA family. In terms of assembly, the system is composed of three essential subunits: KdpA, KdpB and KdpC.

It localises to the cell inner membrane. In terms of biological role, part of the high-affinity ATP-driven potassium transport (or Kdp) system, which catalyzes the hydrolysis of ATP coupled with the electrogenic transport of potassium into the cytoplasm. This subunit binds the periplasmic potassium ions and delivers the ions to the membrane domain of KdpB through an intramembrane tunnel. The chain is Potassium-transporting ATPase potassium-binding subunit from Nitratidesulfovibrio vulgaris (strain ATCC 29579 / DSM 644 / CCUG 34227 / NCIMB 8303 / VKM B-1760 / Hildenborough) (Desulfovibrio vulgaris).